Reading from the N-terminus, the 194-residue chain is Peptidyl-tRNA hydrolase (194 aa).

Tyr16 contributes to the tRNA binding site. Residue His21 is the Proton acceptor of the active site. 3 residues coordinate tRNA: Phe67, Asn69, and Asn115.

The protein belongs to the PTH family. As to quaternary structure, monomer.

It is found in the cytoplasm. It catalyses the reaction an N-acyl-L-alpha-aminoacyl-tRNA + H2O = an N-acyl-L-amino acid + a tRNA + H(+). In terms of biological role, hydrolyzes ribosome-free peptidyl-tRNAs (with 1 or more amino acids incorporated), which drop off the ribosome during protein synthesis, or as a result of ribosome stalling. Catalyzes the release of premature peptidyl moieties from peptidyl-tRNA molecules trapped in stalled 50S ribosomal subunits, and thus maintains levels of free tRNAs and 50S ribosomes. This Salmonella agona (strain SL483) protein is Peptidyl-tRNA hydrolase.